The sequence spans 697 residues: Elongation factor G (697 aa).

The region spanning Glu8 to Val290 is the tr-type G domain. Residues Ala17–Thr24, Asp88–His92, and Asn142–Asp145 contribute to the GTP site.

Belongs to the TRAFAC class translation factor GTPase superfamily. Classic translation factor GTPase family. EF-G/EF-2 subfamily.

It localises to the cytoplasm. Catalyzes the GTP-dependent ribosomal translocation step during translation elongation. During this step, the ribosome changes from the pre-translocational (PRE) to the post-translocational (POST) state as the newly formed A-site-bound peptidyl-tRNA and P-site-bound deacylated tRNA move to the P and E sites, respectively. Catalyzes the coordinated movement of the two tRNA molecules, the mRNA and conformational changes in the ribosome. The polypeptide is Elongation factor G (Methylobacillus flagellatus (strain ATCC 51484 / DSM 6875 / VKM B-1610 / KT)).